Consider the following 429-residue polypeptide: C4-dicarboxylate transport protein (429 aa).

8 helical membrane passes run 3–23 (VSIFKTLYFQVLTAITIGVLL), 44–64 (LIKMIIAPVIFCTVVTGIAGM), 76–96 (IALLYFEIVSTLALLIGLVVV), 144–164 (AFASGNILQVLLFAVLFGFAL), 184–204 (VIFGVINMIMRLAPLGAFGAM), 222–242 (LILCFYLTCILFVVLVLGTIA), 331–351 (TLLVVLLLSSKGAAGVTGSGF), and 352–372 (IVLAATISAVGHLPLAGLALI).

This sequence belongs to the dicarboxylate/amino acid:cation symporter (DAACS) (TC 2.A.23) family.

It is found in the cell inner membrane. Functionally, responsible for the transport of dicarboxylates such as succinate, fumarate, and malate from the periplasm across the membrane. The protein is C4-dicarboxylate transport protein of Yersinia pestis bv. Antiqua (strain Antiqua).